The primary structure comprises 320 residues: Nicotianamine synthase 3 (320 aa).

It belongs to the nicotianamine synthase (NAS)-like family. In terms of tissue distribution, in shoots.

The enzyme catalyses 3 S-adenosyl-L-methionine = nicotianamine + 3 S-methyl-5'-thioadenosine + 3 H(+). Its function is as follows. Synthesizes nicotianamine, a polyamine which serves as a sensor for the physiological iron status within the plant, and/or might be involved in the transport of iron. The protein is Nicotianamine synthase 3 (NAS3) of Arabidopsis thaliana (Mouse-ear cress).